The primary structure comprises 333 residues: Chlorophyllide reductase 35.5 kDa chain (333 aa).

The segment at 1–22 is disordered; sequence MTDAPNLKGFDARLREEAAEEP. Residues 45 to 50 and Lys74 each bind ATP; that span reads GSGKSF. Ser49 contacts Mg(2+). Positions 130 and 165 each coordinate [4Fe-4S] cluster. ATP is bound at residue 219–220; it reads NK.

The protein belongs to the NifH/BchL/ChlL family. In terms of assembly, homodimer. Chlorophyllide reductase is composed of three subunits; BchX, BchY and BchZ. [4Fe-4S] cluster serves as cofactor.

It catalyses the reaction 3-deacetyl-3-vinylbacteriochlorophyllide a + 2 oxidized [2Fe-2S]-[ferredoxin] + ADP + phosphate = chlorophyllide a + 2 reduced [2Fe-2S]-[ferredoxin] + ATP + H2O + H(+). The enzyme catalyses bacteriochlorophyllide a + 2 oxidized [2Fe-2S]-[ferredoxin] + ADP + phosphate = 3-acetyl-3-devinylchlorophyllide a + 2 reduced [2Fe-2S]-[ferredoxin] + ATP + H2O + H(+). The catalysed reaction is 3-deacetyl-3-(1-hydroxyethyl)bacteriochlorophyllide a + 2 oxidized [2Fe-2S]-[ferredoxin] + ADP + phosphate = 3-devinyl-3-(1-hydroxyethyl)chlorophyllide a + 2 reduced [2Fe-2S]-[ferredoxin] + ATP + H2O + H(+). It functions in the pathway porphyrin-containing compound metabolism; bacteriochlorophyll biosynthesis. Functionally, converts chlorophylls (Chl) into bacteriochlorophylls (BChl) by reducing ring B of the tetrapyrrole. This Rhodobacter capsulatus (strain ATCC BAA-309 / NBRC 16581 / SB1003) protein is Chlorophyllide reductase 35.5 kDa chain (bchX).